The sequence spans 356 residues: Holliday junction branch migration complex subunit RuvB (356 aa).

The large ATPase domain (RuvB-L) stretch occupies residues 13-197; it reads LPPARRMLSA…FGIVARLEFY (185 aa). ATP-binding positions include Leu-36, Arg-37, Gly-78, Lys-81, Thr-82, Thr-83, 144–146, Arg-187, Tyr-197, and Arg-234; that span reads EDY. Residue Thr-82 coordinates Mg(2+). Residues 198-268 are small ATPAse domain (RuvB-S); the sequence is TPEELARIVK…IANRALAMLD (71 aa). Residues 271–356 are head domain (RuvB-H); sequence PQGFDLMDRK…RGNAENLFEE (86 aa). DNA is bound by residues Arg-326 and Arg-331.

It belongs to the RuvB family. Homohexamer. Forms an RuvA(8)-RuvB(12)-Holliday junction (HJ) complex. HJ DNA is sandwiched between 2 RuvA tetramers; dsDNA enters through RuvA and exits via RuvB. An RuvB hexamer assembles on each DNA strand where it exits the tetramer. Each RuvB hexamer is contacted by two RuvA subunits (via domain III) on 2 adjacent RuvB subunits; this complex drives branch migration. In the full resolvosome a probable DNA-RuvA(4)-RuvB(12)-RuvC(2) complex forms which resolves the HJ.

It localises to the cytoplasm. The enzyme catalyses ATP + H2O = ADP + phosphate + H(+). In terms of biological role, the RuvA-RuvB-RuvC complex processes Holliday junction (HJ) DNA during genetic recombination and DNA repair, while the RuvA-RuvB complex plays an important role in the rescue of blocked DNA replication forks via replication fork reversal (RFR). RuvA specifically binds to HJ cruciform DNA, conferring on it an open structure. The RuvB hexamer acts as an ATP-dependent pump, pulling dsDNA into and through the RuvAB complex. RuvB forms 2 homohexamers on either side of HJ DNA bound by 1 or 2 RuvA tetramers; 4 subunits per hexamer contact DNA at a time. Coordinated motions by a converter formed by DNA-disengaged RuvB subunits stimulates ATP hydrolysis and nucleotide exchange. Immobilization of the converter enables RuvB to convert the ATP-contained energy into a lever motion, pulling 2 nucleotides of DNA out of the RuvA tetramer per ATP hydrolyzed, thus driving DNA branch migration. The RuvB motors rotate together with the DNA substrate, which together with the progressing nucleotide cycle form the mechanistic basis for DNA recombination by continuous HJ branch migration. Branch migration allows RuvC to scan DNA until it finds its consensus sequence, where it cleaves and resolves cruciform DNA. This Polaromonas naphthalenivorans (strain CJ2) protein is Holliday junction branch migration complex subunit RuvB.